The following is a 488-amino-acid chain: Beta-amylase (488 aa).

3 residues coordinate substrate: aspartate 51, histidine 91, and aspartate 99. Catalysis depends on glutamate 184, which acts as the Proton donor. Positions 293, 298, and 340 each coordinate substrate. Residue glutamate 378 is the Proton acceptor of the active site. Residues 379 to 380 (NA) and arginine 418 contribute to the substrate site.

It belongs to the glycosyl hydrolase 14 family.

The enzyme catalyses Hydrolysis of (1-&gt;4)-alpha-D-glucosidic linkages in polysaccharides so as to remove successive maltose units from the non-reducing ends of the chains.. The sequence is that of Beta-amylase (BMY1) from Zea mays (Maize).